The sequence spans 106 residues: NADH dehydrogenase [ubiquinone] 1 beta subcomplex subunit 9 (106 aa).

This sequence belongs to the complex I LYR family. In terms of assembly, complex I is composed of about 45 different subunits.

Its subcellular location is the mitochondrion inner membrane. Accessory subunit of the mitochondrial membrane respiratory chain NADH dehydrogenase (Complex I), that is believed to be not involved in catalysis. Complex I functions in the transfer of electrons from NADH to the respiratory chain. The immediate electron acceptor for the enzyme is believed to be ubiquinone. This Dictyostelium discoideum (Social amoeba) protein is NADH dehydrogenase [ubiquinone] 1 beta subcomplex subunit 9 (ndufb9).